The sequence spans 660 residues: Probable rhamnogalacturonate lyase B (660 aa).

The signal sequence occupies residues 1-20 (MRLSVSLGLASLWTAIGATA). Asparagine 22, asparagine 27, asparagine 109, asparagine 142, asparagine 238, asparagine 284, asparagine 432, asparagine 492, asparagine 532, asparagine 594, and asparagine 635 each carry an N-linked (GlcNAc...) asparagine glycan.

The protein belongs to the polysaccharide lyase 4 family.

The protein resides in the secreted. It carries out the reaction Endotype eliminative cleavage of L-alpha-rhamnopyranosyl-(1-&gt;4)-alpha-D-galactopyranosyluronic acid bonds of rhamnogalacturonan I domains in ramified hairy regions of pectin leaving L-rhamnopyranose at the reducing end and 4-deoxy-4,5-unsaturated D-galactopyranosyluronic acid at the non-reducing end.. In terms of biological role, pectinolytic enzymes consist of four classes of enzymes: pectin lyase, polygalacturonase, pectin methylesterase and rhamnogalacturonase. Degrades the rhamnogalacturonan I (RG-I) backbone of pectin. In Aspergillus terreus (strain NIH 2624 / FGSC A1156), this protein is Probable rhamnogalacturonate lyase B (rglB).